The following is an 818-amino-acid chain: Nibrin (818 aa).

Residues 22 to 70 (YVVGRKNCEILLTNDQSISRVHAVLTVTEQAVTLKDSSKYGTFVNGEKL) form the FHA domain. 2 BRCT domains span residues 91–168 (SKFS…SALS) and 211–301 (GKTF…LAAI). Disordered stretches follow at residues 372 to 716 (AVGE…DLPR), 729 to 757 (NNSS…KKNV), and 793 to 818 (EEKL…AKKR). The span at 379 to 405 (KTNPTQKASTTNKPLSLGQEPSSTRIV) shows a compositional bias: polar residues. Residues 409-419 (VMSSESFSVVE) show a composition bias toward low complexity. Positions 444–469 (APSSGNTTLKHSPQKQTALTSFFQPS) are enriched in polar residues. The short motif at 470 to 475 (SKKRPR) is the Nuclear localization signal element. The segment covering 515–530 (EETSLGQACGTGQNSS) has biased composition (polar residues). Over residues 549–571 (TAADDLEMSLEELEFLMSDEMDE) the composition is skewed to acidic residues. Residues 586–602 (GLTSKINSEQLSNQQEV) show a composition bias toward polar residues. A compositionally biased stretch (basic and acidic residues) spans 603–612 (TESKGRKGEK). Over residues 613–625 (NQQSSSSNIQSMQ) the composition is skewed to low complexity. Composition is skewed to polar residues over residues 633–644 (VTNQDTQTQSKR) and 653–662 (SSANKGPSKN). Residues 663-675 (KTPELEEVKKEEV) are compositionally biased toward basic and acidic residues. Composition is skewed to polar residues over residues 678–692 (VVNS…QTSE) and 699–708 (MQASTSNSGP). Positions 793–808 (EEKLNEREETLGDDLF) are enriched in basic and acidic residues. The FxF/Y motif signature appears at 804 to 813 (GDDLFRYNPR).

Belongs to the Nibrin family. In terms of assembly, component of the MRN complex composed of two heterodimers rad50 and mre11 associated with a single nbn.

The protein localises to the nucleus. The protein resides in the chromosome. Its subcellular location is the PML body. It is found in the telomere. Component of the MRN complex, which plays a central role in double-strand break (DSB) repair, DNA recombination, maintenance of telomere integrity and meiosis. The MRN complex is involved in the repair of DNA double-strand breaks (DSBs) via homologous recombination (HR), an error-free mechanism which primarily occurs during S and G2 phases. The complex (1) mediates the end resection of damaged DNA, which generates proper single-stranded DNA, a key initial steps in HR, and is (2) required for the recruitment of other repair factors and efficient activation of ATM and ATR upon DNA damage. The MRN complex possesses single-strand endonuclease activity and double-strand-specific 3'-5' exonuclease activity, which are provided by MRE11, to initiate end resection, which is required for single-strand invasion and recombination. Within the MRN complex, nbn acts as a protein-protein adapter, which specifically recognizes and binds phosphorylated proteins, promoting their recruitment to DNA damage sites. Recruits mre11 and rad50 components of the MRN complex to DSBs in response to DNA damage. Promotes the recruitment of PI3/PI4-kinase family members atm, atr, and probably DNA-PKcs to the DNA damage sites, activating their functions. Mediates the recruitment of phosphorylated rbbp8/CtIP to DSBs, leading to cooperation between the MRN complex and rbbp8/CtIP to initiate end resection. The MRN complex and rbbp8/CtIP are also required for chromosome alignment during metaphase. The sequence is that of Nibrin (nbn) from Danio rerio (Zebrafish).